A 162-amino-acid polypeptide reads, in one-letter code: Lipoprotein signal peptidase (162 aa).

Transmembrane regions (helical) follow at residues 12-32 (WLWL…LILQ), 70-90 (WFFA…MYRS), and 102-122 (ALII…GFVV). Residues Asp-123 and Asp-141 contribute to the active site. The chain crosses the membrane as a helical span at residues 137–157 (FNLADSAICIGAALIVLEGFL).

This sequence belongs to the peptidase A8 family.

It is found in the cell inner membrane. It catalyses the reaction Release of signal peptides from bacterial membrane prolipoproteins. Hydrolyzes -Xaa-Yaa-Zaa-|-(S,diacylglyceryl)Cys-, in which Xaa is hydrophobic (preferably Leu), and Yaa (Ala or Ser) and Zaa (Gly or Ala) have small, neutral side chains.. Its pathway is protein modification; lipoprotein biosynthesis (signal peptide cleavage). This protein specifically catalyzes the removal of signal peptides from prolipoproteins. The polypeptide is Lipoprotein signal peptidase (Citrobacter koseri (strain ATCC BAA-895 / CDC 4225-83 / SGSC4696)).